The following is a 722-amino-acid chain: Polyribonucleotide nucleotidyltransferase (722 aa).

Positions 487 and 493 each coordinate Mg(2+). Residues 554–613 form the KH domain; that stretch reads PRIETFKIPTDKIREVIGTGGKVIREIVEKTGAKVNIEDDGTVKVASSDGESIKAAIKWI. The region spanning 623–691 is the S1 motif domain; that stretch reads GEIYEGTVVK…DRGKTRLSMK (69 aa). Residues 691 to 722 form a disordered region; it reads KVVDQDTGEDLEAKQKAEAKAEDEAPAQAAGE. Over residues 701-713 the composition is skewed to basic and acidic residues; it reads LEAKQKAEAKAED.

This sequence belongs to the polyribonucleotide nucleotidyltransferase family. It depends on Mg(2+) as a cofactor.

The protein localises to the cytoplasm. It carries out the reaction RNA(n+1) + phosphate = RNA(n) + a ribonucleoside 5'-diphosphate. In terms of biological role, involved in mRNA degradation. Catalyzes the phosphorolysis of single-stranded polyribonucleotides processively in the 3'- to 5'-direction. This is Polyribonucleotide nucleotidyltransferase from Rhodopseudomonas palustris (strain BisB5).